Here is a 291-residue protein sequence, read N- to C-terminus: Undecaprenyl-diphosphatase (291 aa).

8 consecutive transmembrane segments (helical) span residues 1–21 (MFII…LTEF), 48–68 (SAFT…AWVF), 102–122 (LHVL…DDFI), 126–146 (LFSV…MIIA), 162–182 (INYF…WPGF), 203–223 (SDFT…LSLL), 231–251 (IADI…GLIA), and 267–287 (FAIY…GFGI).

This sequence belongs to the UppP family.

It is found in the cell membrane. The catalysed reaction is di-trans,octa-cis-undecaprenyl diphosphate + H2O = di-trans,octa-cis-undecaprenyl phosphate + phosphate + H(+). Its function is as follows. Catalyzes the dephosphorylation of undecaprenyl diphosphate (UPP). Confers resistance to bacitracin. The protein is Undecaprenyl-diphosphatase of Staphylococcus aureus (strain bovine RF122 / ET3-1).